A 106-amino-acid polypeptide reads, in one-letter code: Glutaredoxin-1 (106 aa).

A2 is subject to N-acetylalanine. The region spanning 3 to 106 (QAFVNSKIQP…TRLKQMGALQ (104 aa)) is the Glutaredoxin domain. K9 bears the N6-succinyllysine mark. Disulfide bonds link C23/C26 and C79/C83.

This sequence belongs to the glutaredoxin family.

It is found in the cytoplasm. In terms of biological role, has a glutathione-disulfide oxidoreductase activity in the presence of NADPH and glutathione reductase. Reduces low molecular weight disulfides and proteins. The polypeptide is Glutaredoxin-1 (GLRX) (Bos taurus (Bovine)).